Reading from the N-terminus, the 323-residue chain is Phosphatidylethanolamine:ceramide ethanolaminephosphotransferase (323 aa).

Over 1–26 (MAVPPVEMYSGSFWNRMRKPLPLRTQ) the chain is Cytoplasmic. The chain crosses the membrane as a helical span at residues 27-47 (VIRFTVVFVIVSFILAVALQI). Residues 48-73 (THERMPDPKVTKPLPDLGFEVLHKYP) are Extracellular-facing. The helical transmembrane segment at 74-94 (FLFSVADCCIGFLNILSVFTA) threads the bilayer. The Cytoplasmic segment spans residues 95–147 (FKLYLLHRHCVGSGEPELPCNIPGVSRFFLSVWLCKENCRIELRNVHTIAWIR). Residues 148 to 168 (FITSYALLLLSRSVIMVVTSL) traverse the membrane as a helical segment. At 169–211 (PNPDDLCQDPPKIENRVKDVILTVLTAGAGSIHCGDLMYSGHT) the chain is on the extracellular side. H210 is a catalytic residue. A helical transmembrane segment spans residues 212–232 (VILTLHLMFHWIYGAMVHWSF). Position 233 (R233) is a topological domain, cytoplasmic. The chain crosses the membrane as a helical span at residues 234 to 254 (PVVTVVAIFGYYCIVASRFHY). Catalysis depends on residues H253 and D257. Topologically, residues 255–257 (TDD) are extracellular. The chain crosses the membrane as a helical span at residues 258–278 (VLVAIYLTIATFIAVGHNADG). The Cytoplasmic segment spans residues 279-323 (APWQLQLFIRWLPCCGANSREVTEDGVPVAIVIKNEEMMNFEGKS).

Belongs to the sphingomyelin synthase family.

It localises to the membrane. Its function is as follows. Bidirectional lipid ethanolaminephosphotransferase capable of converting phosphatidylethanolamine (PE) and ceramide to ethanolamine-phosphorylceramide (EPC) and diacylglycerol (DAG) and vice versa. Direction is dependent on the relative concentrations of DAG and ceramide as phosphoethanolamine acceptors. Does not function strictly as a SM synthase. Essential for viability of the pathogenic bloodstream stage of this human protozoan parasite and, consequently, can be considered as potential drug target. This is Phosphatidylethanolamine:ceramide ethanolaminephosphotransferase from Trypanosoma brucei brucei (strain 927/4 GUTat10.1).